The following is a 1067-amino-acid chain: MSRPNTRNKNKRQRPDAVDSSSQILRKIHEANDVTDDDINQLFMIWKPVCQGCRVNTRDNPNCFCGLVPPLNGSRKSGLWQKTSEIIQSLGPDPTLDRRDSESTPAGLTNLGATCYANSILQCLYMNTAFREGVFSVEVHVLKQNPVLDQIARLFAQLHASQKSFVDSDAFVKTLELDNGVQQDTHEFLTLLLSLLERCLLHSGVKAKTIVQDLFSGSVSHVTTCSKCGRDSEASSKMEDFYALELNVKGLKSLDASLNDYLSLEQLNGDNQYFCGSCNARVDATRCIKLRTLPPVITFQLKRCIFLPKTTAKKKITSSFSFPQVLDMGSRLAESSQNKLTYDLSAVLIHKGSAVNSGHYVAHIKDEKTGLWWEFDDEHVSELGKRPCNEASSSTPQSESNGTASSGNITDGIQSGSSDCRSAIKSEVFSSSDAYMLMYSLRCDKQENQEGQKENPIDITKGEVKQLKGGYLPKHLSEWINNMNAVFLESCKQYNLRKEKELNALTERRQEVRTILSEAAVQSLEEQYFWISTDWLRLWADTTLPPALDNTPLLCSHGKVHASKVNCMKRISELAWIKLESKFNGGPKLGKGDYCRDCLMDGARMVVSSDSYRDRRTFMKSIANDVLSGKCEDGMYYISRAWLQQWIKRKNLDAPTEADAGPTNAITCNHGELMPEQAPGAKRVVVPENFWSFLFEDALKVMSEDTLDCTCFPVDSSQCCHCTEVLSEVACFEDSLRTLKVKQRQNHEKLATGKGIPLTPQSRYFLLPSPWLVQWRIYINMTGKNSSSAPEPERLDGVINTLKCKKHTRLLERLPELVCRRGSYFQKNPSTDKLTIIPELDWKYFCDEWGGLMENGISAFIEVGNTDQSSSPDVIDLEKDSSPDDNMDVDAQQLILRASPEICEECIGERESCELMQKLSYSEGDVFVCFVRGKEAPKAMLEASDSSFEVDRRTSKRSRRTNYGNLTSLKVSATTTVYQLKMMIWELLGVMKENQELHKGSKVIDQESATLADMNIFPGDRLWVRDTEMHEHRDIADELCEKKPGAQDIEEGFRGTLLTGNISSEAC.

Residues methionine 1–arginine 12 show a composition bias toward basic residues. Residues methionine 1–serine 22 are disordered. The region spanning alanine 106–arginine 442 is the USP domain. Cysteine 115 serves as the catalytic Nucleophile. The Proton acceptor role is filled by histidine 359. The tract at residues lysine 385 to serine 418 is disordered. Polar residues predominate over residues glutamate 390 to serine 418. 3 consecutive DUSP domains span residues asparagine 503–cysteine 595, aspartate 610–cysteine 711, and threonine 738–isoleucine 861. In terms of domain architecture, Ubiquitin-like spans phenylalanine 948–glutamate 1031.

This sequence belongs to the peptidase C19 family. In terms of tissue distribution, expressed in seedlings, roots, stems, leaves and inflorescences.

The protein localises to the nucleus. The enzyme catalyses Thiol-dependent hydrolysis of ester, thioester, amide, peptide and isopeptide bonds formed by the C-terminal Gly of ubiquitin (a 76-residue protein attached to proteins as an intracellular targeting signal).. Its function is as follows. Recognizes and hydrolyzes the peptide bond at the C-terminal Gly of ubiquitin. Involved in the processing of poly-ubiquitin precursors as well as that of ubiquitinated proteins. Deubiquitinates H2BK143ub1 of histone H2B. The sequence is that of Ubiquitin carboxyl-terminal hydrolase 26 (UBP26) from Arabidopsis thaliana (Mouse-ear cress).